A 362-amino-acid polypeptide reads, in one-letter code: 3-isopropylmalate dehydrogenase (362 aa).

Position 75-88 (75-88) interacts with NAD(+); the sequence is GPKWANLPPTEQPE. Substrate is bound by residues Arg-96, Arg-106, Arg-135, and Asp-224. Residues Asp-224, Asp-248, and Asp-252 each coordinate Mg(2+). 282–294 contacts NAD(+); that stretch reads GSAPDIAGLGVAN.

It belongs to the isocitrate and isopropylmalate dehydrogenases family. LeuB type 1 subfamily. As to quaternary structure, homodimer. The cofactor is Mg(2+). Requires Mn(2+) as cofactor.

Its subcellular location is the cytoplasm. It carries out the reaction (2R,3S)-3-isopropylmalate + NAD(+) = 4-methyl-2-oxopentanoate + CO2 + NADH. It functions in the pathway amino-acid biosynthesis; L-leucine biosynthesis; L-leucine from 3-methyl-2-oxobutanoate: step 3/4. In terms of biological role, catalyzes the oxidation of 3-carboxy-2-hydroxy-4-methylpentanoate (3-isopropylmalate) to 3-carboxy-4-methyl-2-oxopentanoate. The product decarboxylates to 4-methyl-2 oxopentanoate. The sequence is that of 3-isopropylmalate dehydrogenase from Colwellia psychrerythraea (strain 34H / ATCC BAA-681) (Vibrio psychroerythus).